Reading from the N-terminus, the 369-residue chain is DNA replication and repair protein RecF (369 aa).

Residue 30–37 participates in ATP binding; it reads GENGQGKT.

The protein belongs to the RecF family.

The protein resides in the cytoplasm. Its function is as follows. The RecF protein is involved in DNA metabolism; it is required for DNA replication and normal SOS inducibility. RecF binds preferentially to single-stranded, linear DNA. It also seems to bind ATP. The polypeptide is DNA replication and repair protein RecF (Anaeromyxobacter sp. (strain Fw109-5)).